The chain runs to 203 residues: Cbp/p300-interacting transactivator 1 (203 aa).

Disordered regions lie at residues methionine 1–glutamine 24 and threonine 51–asparagine 86. Residues proline 61–serine 84 are compositionally biased toward low complexity. The short motif at leucine 168–leucine 177 is the Nuclear export signal element.

The protein belongs to the CITED family. In terms of assembly, homodimer. Binds to RBM14. Interacts (via N-terminus) with HSPA8; the interaction suppresses the association of CITED1 with p300/CBP and SMAD-mediated transcription transactivation. Interacts (via C-terminus) with TOX3 (via HGM box); the interaction increases estrogen-response element (ERE)-dependent transcription and protection against cell death. Interacts with ESR1; the interaction occurs in a estrogen-dependent manner. Interacts (unphosphorylated form preferentially and via C-terminus) with EP300. Interacts (via C-terminus) with CREBBP. Interacts with EGR2. Post-translationally, phosphorylated. Phosphorylation changes in a cell cycle-dependent manner and reduces its transcriptional cofactor activity. Expressed in calvarial osteoblasts. Expressed in nulliparous mammary epithelial cells; absent in pregnant mice and in lacting mammary glands. Also expressed in mammary tumors (at protein level). Expressed only in melanocytes and testis. Expressed at high levels in the strongly pigmented melanoma cells but at low levels in the weakly pigmented cells.

Its subcellular location is the nucleus. It is found in the cytoplasm. Functionally, transcriptional coactivator of the p300/CBP-mediated transcription complex. Enhances SMAD-mediated transcription by strengthening the functional link between the DNA-binding SMAD transcription factors and the p300/CBP transcription coactivator complex. Stimulates estrogen-dependent transactivation activity mediated by estrogen receptors signaling; stabilizes the interaction of estrogen receptor ESR1 and histone acetyltransferase EP300. Positively regulates TGF-beta signaling through its association with the SMAD/p300/CBP-mediated transcriptional coactivator complex. Induces transcription from estrogen-responsive promoters and protection against cell death. Potentiates EGR2-mediated transcriptional activation activity from the ERBB2 promoter. Acts as an inhibitor of osteoblastic mineralization through a cAMP-dependent parathyroid hormone receptor signaling. May play a role in pigmentation of melanocytes. Associates with chromatin to the estrogen-responsive TGF-alpha promoter region in a estrogen-dependent manner. The protein is Cbp/p300-interacting transactivator 1 (Cited1) of Mus musculus (Mouse).